The chain runs to 408 residues: UDP-N-acetylglucosamine--dolichyl-phosphate N-acetylglucosaminephosphotransferase (408 aa).

The Lumenal segment spans residues 1 to 10 (MWAFPELPLP). A helical membrane pass occupies residues 11 to 38 (LLVNLFGSLLGFVATVTLIPAFRSHFIA). The Cytoplasmic portion of the chain corresponds to 39 to 58 (ARLCGQDLNKLSRQQIPESQ). UDP-N-acetyl-alpha-D-glucosamine contacts are provided by residues 44–46 (QDL) and Glu56. Residues 59-78 (GVICGAVFLIILFCFIPFPF) form a helical membrane-spanning segment. Topologically, residues 79–91 (LNCFVEEQCKAFP) are lumenal. A helical membrane pass occupies residues 92–118 (HHEFVALIGALLAICCMIFLGFADDVL). Topologically, residues 119–121 (NLP) are cytoplasmic. The chain crosses the membrane as a helical span at residues 122–143 (WRHKLLLPTAASLPLLMVYFTN). Lys125 serves as a coordination point for dolichyl phosphate. At 144–166 (FGNTTIVVPKPFRWILGLHLDLG) the chain is on the lumenal side. A glycan (N-linked (GlcNAc...) asparagine) is linked at Asn146. The chain crosses the membrane as a helical span at residues 167 to 186 (ILYYVYMGLLAVFCTNAINI). 178-186 (VFCTNAINI) lines the dolichyl phosphate pocket. Asn185 lines the Mg(2+) pocket. At 187 to 192 (LAGING) the chain is on the cytoplasmic side. Asn191 contributes to the UDP-N-acetyl-alpha-D-glucosamine binding site. The helical transmembrane segment at 193-213 (LEAGQSLVISASIIVFNLVEL) threads the bilayer. At 214-218 (EGDYR) the chain is on the lumenal side. A helical membrane pass occupies residues 219 to 242 (DDHVFSLYFMIPFFFTTLGLLYHN). The Cytoplasmic segment spans residues 243–250 (WYPSQVFV). A helical membrane pass occupies residues 251–269 (GDTFCYFAGMTFAVVGILG). Asp252 provides a ligand contact to Mg(2+). Over 270 to 271 (HF) the chain is Lumenal. A helical transmembrane segment spans residues 272–293 (SKTMLLFFIPQVFNFLYSLPQL). Residues 294–375 (LHAIPCPRHR…LLLKIFGPIH (82 aa)) lie on the Cytoplasmic side of the membrane. 301–303 (RHR) serves as a coordination point for UDP-N-acetyl-alpha-D-glucosamine. Residues 376-400 (ERNLTLLLLLLQILSSAVTFSIRYQ) traverse the membrane as a helical segment. The Lumenal segment spans residues 401–408 (LVRLFYDV).

This sequence belongs to the glycosyltransferase 4 family. Homodimer. Requires Mg(2+) as cofactor.

It is found in the endoplasmic reticulum membrane. It catalyses the reaction a di-trans,poly-cis-dolichyl phosphate + UDP-N-acetyl-alpha-D-glucosamine = an N-acetyl-alpha-D-glucosaminyl-diphospho-di-trans,poly-cis-dolichol + UMP. The protein operates within protein modification; protein glycosylation. With respect to regulation, inhibited by natural nucleoside antibiotic tunicamycin, which acts as a structural analog and competitor of UDP-GlcNAc. UDP-N-acetylglucosamine--dolichyl-phosphate N-acetylglucosaminephosphotransferase that operates in the biosynthetic pathway of dolichol-linked oligosaccharides, the glycan precursors employed in protein asparagine (N)-glycosylation. The assembly of dolichol-linked oligosaccharides begins on the cytosolic side of the endoplasmic reticulum membrane and finishes in its lumen. The sequential addition of sugars to dolichol pyrophosphate produces dolichol-linked oligosaccharides containing fourteen sugars, including two GlcNAcs, nine mannoses and three glucoses. Once assembled, the oligosaccharide is transferred from the lipid to nascent proteins by oligosaccharyltransferases. Catalyzes the initial step of dolichol-linked oligosaccharide biosynthesis, transfering GlcNAc-1-P from cytosolic UDP-GlcNAc onto the carrier lipid dolichyl phosphate (P-dolichol), yielding GlcNAc-P-P-dolichol embedded in the cytoplasmic leaflet of the endoplasmic reticulum membrane. The polypeptide is UDP-N-acetylglucosamine--dolichyl-phosphate N-acetylglucosaminephosphotransferase (DPAGT1) (Cricetulus longicaudatus (Long-tailed dwarf hamster)).